A 179-amino-acid chain; its full sequence is Large ribosomal subunit protein uL6 (179 aa).

The protein belongs to the universal ribosomal protein uL6 family. In terms of assembly, part of the 50S ribosomal subunit.

Its function is as follows. This protein binds to the 23S rRNA, and is important in its secondary structure. It is located near the subunit interface in the base of the L7/L12 stalk, and near the tRNA binding site of the peptidyltransferase center. This Leptospira biflexa serovar Patoc (strain Patoc 1 / ATCC 23582 / Paris) protein is Large ribosomal subunit protein uL6.